The following is a 265-amino-acid chain: Hydroxyethylthiazole kinase (265 aa).

Met50 lines the substrate pocket. ATP contacts are provided by Arg125 and Thr171. A substrate-binding site is contributed by Gly198.

It belongs to the Thz kinase family. It depends on Mg(2+) as a cofactor.

The catalysed reaction is 5-(2-hydroxyethyl)-4-methylthiazole + ATP = 4-methyl-5-(2-phosphooxyethyl)-thiazole + ADP + H(+). It participates in cofactor biosynthesis; thiamine diphosphate biosynthesis; 4-methyl-5-(2-phosphoethyl)-thiazole from 5-(2-hydroxyethyl)-4-methylthiazole: step 1/1. Functionally, catalyzes the phosphorylation of the hydroxyl group of 4-methyl-5-beta-hydroxyethylthiazole (THZ). This Salmonella arizonae (strain ATCC BAA-731 / CDC346-86 / RSK2980) protein is Hydroxyethylthiazole kinase.